The sequence spans 216 residues: MQPFRLHRGVVAPIDRENVDTDAIIPKQFLKSIKRSGFGVNLFDEWRYLDHGEPGQDPASRRPNPDFVLNQPRYRGASVLLARRNFGCGSSREHAPWAIDQYGFRALIAPSFADIFFNNCFKNGLLPIVLPEAQVARLFDEVAAFPGYELTIDLERQVVVKPDGDELAFDVEPFRRHCLLGGLDDIGLTLRHADKIRAYEAERLLRKPWLANTLAS.

Belongs to the LeuD family. LeuD type 1 subfamily. In terms of assembly, heterodimer of LeuC and LeuD.

It catalyses the reaction (2R,3S)-3-isopropylmalate = (2S)-2-isopropylmalate. It functions in the pathway amino-acid biosynthesis; L-leucine biosynthesis; L-leucine from 3-methyl-2-oxobutanoate: step 2/4. Catalyzes the isomerization between 2-isopropylmalate and 3-isopropylmalate, via the formation of 2-isopropylmaleate. This is 3-isopropylmalate dehydratase small subunit from Methylibium petroleiphilum (strain ATCC BAA-1232 / LMG 22953 / PM1).